A 34-amino-acid chain; its full sequence is Potassium channel toxin (34 aa).

3 cysteine pairs are disulfide-bonded: Cys6–Cys25, Cys11–Cys29, and Cys15–Cys31.

Belongs to the short scorpion toxin superfamily. Potassium channel inhibitor family. Alpha-KTx 21 subfamily. Expressed by the venom gland.

It is found in the secreted. Functionally, toxin that blocks voltage-gated potassium channels (Kv). This chain is Potassium channel toxin, found in Tityus metuendus (Scorpion).